A 58-amino-acid chain; its full sequence is Probable spore germination protein GerPD (58 aa).

In terms of biological role, required for the formation of functionally normal spores. Could be involved in the establishment of normal spore coat structure and/or permeability, which allows the access of germinants to their receptor. The protein is Probable spore germination protein GerPD (gerPD) of Bacillus subtilis (strain 168).